A 642-amino-acid polypeptide reads, in one-letter code: Threonine--tRNA ligase (642 aa).

Residues 1–61 (MPVITLPDGS…ETDAELSIIT (61 aa)) enclose the TGS domain. A catalytic region spans residues 243–534 (DHRKIGKQLD…LIEEYAGRFP (292 aa)). Zn(2+) contacts are provided by Cys-334, His-385, and His-511.

Belongs to the class-II aminoacyl-tRNA synthetase family. As to quaternary structure, homodimer. Zn(2+) serves as cofactor.

The protein localises to the cytoplasm. The enzyme catalyses tRNA(Thr) + L-threonine + ATP = L-threonyl-tRNA(Thr) + AMP + diphosphate + H(+). Functionally, catalyzes the attachment of threonine to tRNA(Thr) in a two-step reaction: L-threonine is first activated by ATP to form Thr-AMP and then transferred to the acceptor end of tRNA(Thr). Also edits incorrectly charged L-seryl-tRNA(Thr). The polypeptide is Threonine--tRNA ligase (Shewanella baltica (strain OS195)).